Reading from the N-terminus, the 327-residue chain is Peroxidase 15 (327 aa).

The signal sequence occupies residues 1-23 (MASFSPLLAMALAIFIFSSHSNA). Pyrrolidone carboxylic acid is present on Gln-24. Disulfide bonds link Cys-34/Cys-115, Cys-67/Cys-72, Cys-121/Cys-323, and Cys-200/Cys-232. Residue Asn-36 is glycosylated (N-linked (GlcNAc...) asparagine). Catalysis depends on His-65, which acts as the Proton acceptor. Ca(2+)-binding residues include Asp-66, Val-69, Gly-71, Asp-73, and Ser-75. N-linked (GlcNAc...) asparagine glycosylation is found at Asn-81, Asn-96, and Asn-159. Pro-163 lines the substrate pocket. 2 N-linked (GlcNAc...) asparagine glycosylation sites follow: Asn-168 and Asn-171. His-193 is a heme b binding site. Position 194 (Thr-194) interacts with Ca(2+). N-linked (GlcNAc...) asparagine glycosylation is found at Asn-209 and Asn-221. 3 residues coordinate Ca(2+): Asp-245, Thr-248, and Asp-253. Asn-287 and Asn-291 each carry an N-linked (GlcNAc...) asparagine glycan.

It belongs to the peroxidase family. Classical plant (class III) peroxidase subfamily. Ca(2+) serves as cofactor. The cofactor is heme b.

Its subcellular location is the secreted. The enzyme catalyses 2 a phenolic donor + H2O2 = 2 a phenolic radical donor + 2 H2O. Functionally, removal of H(2)O(2), oxidation of toxic reductants, biosynthesis and degradation of lignin, suberization, auxin catabolism, response to environmental stresses such as wounding, pathogen attack and oxidative stress. These functions might be dependent on each isozyme/isoform in each plant tissue. The polypeptide is Peroxidase 15 (Ipomoea batatas (Sweet potato)).